A 122-amino-acid chain; its full sequence is Large ribosomal subunit protein uL14 (122 aa).

Belongs to the universal ribosomal protein uL14 family. Part of the 50S ribosomal subunit. Forms a cluster with proteins L3 and L19. In the 70S ribosome, L14 and L19 interact and together make contacts with the 16S rRNA in bridges B5 and B8.

In terms of biological role, binds to 23S rRNA. Forms part of two intersubunit bridges in the 70S ribosome. This Chlamydia muridarum (strain MoPn / Nigg) protein is Large ribosomal subunit protein uL14.